A 101-amino-acid polypeptide reads, in one-letter code: Putative septation protein SpoVG (101 aa).

The protein belongs to the SpoVG family.

In terms of biological role, could be involved in septation. The protein is Putative septation protein SpoVG of Staphylococcus saprophyticus subsp. saprophyticus (strain ATCC 15305 / DSM 20229 / NCIMB 8711 / NCTC 7292 / S-41).